Consider the following 592-residue polypeptide: V-type ATP synthase alpha chain (592 aa).

232 to 239 (GPFGSGKT) provides a ligand contact to ATP.

It belongs to the ATPase alpha/beta chains family.

The enzyme catalyses ATP + H2O + 4 H(+)(in) = ADP + phosphate + 5 H(+)(out). In terms of biological role, produces ATP from ADP in the presence of a proton gradient across the membrane. The V-type alpha chain is a catalytic subunit. This is V-type ATP synthase alpha chain from Clostridioides difficile (strain 630) (Peptoclostridium difficile).